Consider the following 255-residue polypeptide: MNINKIALIYNHNSKHLAIIEEIKKLYNYCKIEEAEVIIVIGGDGELLHNIHRYMHLNIPFYGVNLGSLGFLMNPLDTKKLLQNIHDSTVSILNPLLMQVADTNGQIYTALAINEVSIFRKTNQAAKFRIEVNGIERMNELVADGALVATPAGSSAYNLSASGPILPLESNMLCLTPICSFRPRRWHGALLLSSATIKFEILNTNKRPVNATADFQEFNNITNVTVKSTKDKPVKLLFNKNHTLEDRIIKEQFGG.

The active-site Proton acceptor is the D44. NAD(+) is bound by residues D44 to G45, H49, N114 to E115, D144, A152, S155 to S160, and Q216.

Belongs to the NAD kinase family. The cofactor is a divalent metal cation.

Its subcellular location is the cytoplasm. It catalyses the reaction NAD(+) + ATP = ADP + NADP(+) + H(+). Functionally, involved in the regulation of the intracellular balance of NAD and NADP, and is a key enzyme in the biosynthesis of NADP. Catalyzes specifically the phosphorylation on 2'-hydroxyl of the adenosine moiety of NAD to yield NADP. The protein is NAD kinase of Rickettsia rickettsii (strain Iowa).